Reading from the N-terminus, the 488-residue chain is L-arabinose isomerase 1 (488 aa).

Positions 306, 331, 348, and 447 each coordinate Mn(2+).

It belongs to the arabinose isomerase family. Mn(2+) is required as a cofactor.

The enzyme catalyses beta-L-arabinopyranose = L-ribulose. The protein operates within carbohydrate degradation; L-arabinose degradation via L-ribulose; D-xylulose 5-phosphate from L-arabinose (bacterial route): step 1/3. Catalyzes the conversion of L-arabinose to L-ribulose. The sequence is that of L-arabinose isomerase 1 from Clostridium acetobutylicum (strain ATCC 824 / DSM 792 / JCM 1419 / IAM 19013 / LMG 5710 / NBRC 13948 / NRRL B-527 / VKM B-1787 / 2291 / W).